A 66-amino-acid chain; its full sequence is DNA-binding protein 7d (66 aa).

2 positions are modified to N6-methyllysine; partial: K5 and K7.

This sequence belongs to the 7 kDa DNA-binding/endoribonuclease P2 family. In terms of assembly, monomer. Post-translationally, lys-5 was 70% monomethylated in form 7a, 25% in form 7b, and 20% in form 7d. Lys-7 was 50% monomethylated in form 7a, 40% in form 7b, and 50% in form 7d.

The protein localises to the cytoplasm. In terms of biological role, can constrain negative DNA supercoils. May be involved in maintaining the integrity of the genome at high temperature. In Sulfolobus acidocaldarius (strain ATCC 33909 / DSM 639 / JCM 8929 / NBRC 15157 / NCIMB 11770), this protein is DNA-binding protein 7d.